The sequence spans 292 residues: Phosphatidylglycerol--prolipoprotein diacylglyceryl transferase (292 aa).

3 helical membrane passes run 18–38 (LFGVTFALRWYALAYIAGLLI), 67–87 (LLTWVILGVILGGRLGFVLFY), and 105–125 (GGMSFHGGFLGVMTALVAFCL). Arginine 150 provides a ligand contact to a 1,2-diacyl-sn-glycero-3-phospho-(1'-sn-glycerol). The next 3 membrane-spanning stretches (helical) occupy residues 193–213 (QIYEAGLEGILLFAVLSLLVW), 222–242 (GSVSGMFLAGYGATRFLVEFV), and 266–286 (GLTMGQILSLPMILLGLYLIL).

Belongs to the Lgt family.

The protein localises to the cell inner membrane. It carries out the reaction L-cysteinyl-[prolipoprotein] + a 1,2-diacyl-sn-glycero-3-phospho-(1'-sn-glycerol) = an S-1,2-diacyl-sn-glyceryl-L-cysteinyl-[prolipoprotein] + sn-glycerol 1-phosphate + H(+). It functions in the pathway protein modification; lipoprotein biosynthesis (diacylglyceryl transfer). In terms of biological role, catalyzes the transfer of the diacylglyceryl group from phosphatidylglycerol to the sulfhydryl group of the N-terminal cysteine of a prolipoprotein, the first step in the formation of mature lipoproteins. The sequence is that of Phosphatidylglycerol--prolipoprotein diacylglyceryl transferase from Cereibacter sphaeroides (strain ATCC 17029 / ATH 2.4.9) (Rhodobacter sphaeroides).